Consider the following 362-residue polypeptide: S-adenosylmethionine decarboxylase proenzyme 2 (362 aa).

Active-site residues include glutamate 9 and glutamate 12. Glutamate 68 contributes to the substrate binding site. Serine 69 acts as the Schiff-base intermediate with substrate; via pyruvic acid in catalysis. Serine 69 is subject to Pyruvic acid (Ser); by autocatalysis. The active-site Proton donor; for catalytic activity is cysteine 83. Residues serine 232 and histidine 245 each act as proton acceptor; for processing activity in the active site. Glutamate 249 contributes to the substrate binding site.

The protein belongs to the eukaryotic AdoMetDC family. Pyruvate serves as cofactor. Post-translationally, is synthesized initially as an inactive proenzyme. Formation of the active enzyme involves a self-maturation process in which the active site pyruvoyl group is generated from an internal serine residue via an autocatalytic post-translational modification. Two non-identical subunits are generated from the proenzyme in this reaction, and the pyruvate is formed at the N-terminus of the alpha chain, which is derived from the carboxyl end of the proenzyme. The post-translation cleavage follows an unusual pathway, termed non-hydrolytic serinolysis, in which the side chain hydroxyl group of the serine supplies its oxygen atom to form the C-terminus of the beta chain, while the remainder of the serine residue undergoes an oxidative deamination to produce ammonia and the pyruvoyl group blocking the N-terminus of the alpha chain.

It catalyses the reaction S-adenosyl-L-methionine + H(+) = S-adenosyl 3-(methylsulfanyl)propylamine + CO2. Its pathway is amine and polyamine biosynthesis; S-adenosylmethioninamine biosynthesis; S-adenosylmethioninamine from S-adenosyl-L-methionine: step 1/1. Functionally, essential for biosynthesis of the polyamines spermidine and spermine. Essential for polyamine homeostasis, and normal plant embryogenesis, growth and development. The protein is S-adenosylmethionine decarboxylase proenzyme 2 of Arabidopsis thaliana (Mouse-ear cress).